The primary structure comprises 159 residues: MAKEPTEAAHPQPEQTKTNHKAHRPVGGYVLAKDPIEINQGRPRTTLTVRNTGDRPIQIGSHFHFFEVNRYLEFDRSKAFGLRLDIPANTAVRFEPGDEKEVTLVPFAGKRFIFGFNNLVDGWSGDGPTPDYQPNREIAAERAEKLGFKSCKSGGKDAK.

Positions 1 to 23 are disordered; that stretch reads MAKEPTEAAHPQPEQTKTNHKAH.

The protein belongs to the urease beta subunit family. In terms of assembly, heterotrimer of UreA (gamma), UreB (beta) and UreC (alpha) subunits. Three heterotrimers associate to form the active enzyme.

It is found in the cytoplasm. It carries out the reaction urea + 2 H2O + H(+) = hydrogencarbonate + 2 NH4(+). Its pathway is nitrogen metabolism; urea degradation; CO(2) and NH(3) from urea (urease route): step 1/1. This Brucella abortus biovar 1 (strain 9-941) protein is Urease subunit beta 2.